We begin with the raw amino-acid sequence, 233 residues long: Uracil-DNA glycosylase (233 aa).

Asp-70 (proton acceptor) is an active-site residue.

It belongs to the uracil-DNA glycosylase (UDG) superfamily. UNG family.

It localises to the cytoplasm. It catalyses the reaction Hydrolyzes single-stranded DNA or mismatched double-stranded DNA and polynucleotides, releasing free uracil.. Functionally, excises uracil residues from the DNA which can arise as a result of misincorporation of dUMP residues by DNA polymerase or due to deamination of cytosine. The polypeptide is Uracil-DNA glycosylase (Helicobacter pylori (strain G27)).